The primary structure comprises 400 residues: CinA-like protein (400 aa).

The protein belongs to the CinA family.

The sequence is that of CinA-like protein from Escherichia coli O9:H4 (strain HS).